The following is a 295-amino-acid chain: ATP synthase gamma chain (295 aa).

This sequence belongs to the ATPase gamma chain family. F-type ATPases have 2 components, CF(1) - the catalytic core - and CF(0) - the membrane proton channel. CF(1) has five subunits: alpha(3), beta(3), gamma(1), delta(1), epsilon(1). CF(0) has three main subunits: a, b and c.

It localises to the cell inner membrane. Produces ATP from ADP in the presence of a proton gradient across the membrane. The gamma chain is believed to be important in regulating ATPase activity and the flow of protons through the CF(0) complex. This is ATP synthase gamma chain from Methylorubrum populi (strain ATCC BAA-705 / NCIMB 13946 / BJ001) (Methylobacterium populi).